The following is a 327-amino-acid chain: Probable NAD(P)H-dependent D-xylose reductase xyl1 (327 aa).

Catalysis depends on Tyr-57, which acts as the Proton donor. His-119 provides a ligand contact to substrate. NAD(+) contacts are provided by residues Ser-173–Asn-174, Ser-222–Glu-231, and Lys-278–Asn-288.

Belongs to the aldo/keto reductase family.

The catalysed reaction is xylitol + NAD(+) = D-xylose + NADH + H(+). It carries out the reaction xylitol + NADP(+) = D-xylose + NADPH + H(+). The protein operates within carbohydrate metabolism; D-xylose degradation. Catalyzes the initial reaction in the xylose utilization pathway by reducing D-xylose into xylitol. Xylose is a major component of hemicelluloses such as xylan. Most fungi utilize D-xylose via three enzymatic reactions, xylose reductase (XR), xylitol dehydrogenase (XDH), and xylulokinase, to form xylulose 5-phosphate, which enters pentose phosphate pathway. This chain is Probable NAD(P)H-dependent D-xylose reductase xyl1 (xyl1), found in Arthroderma otae (strain ATCC MYA-4605 / CBS 113480) (Microsporum canis).